Reading from the N-terminus, the 256-residue chain is 5-keto-4-deoxy-D-glucarate aldolase (256 aa).

His-50 functions as the Proton acceptor in the catalytic mechanism. Gln-151 lines the substrate pocket. A Mg(2+)-binding site is contributed by Glu-153. Ser-178 and Asp-179 together coordinate substrate. Asp-179 is a binding site for Mg(2+).

Belongs to the HpcH/HpaI aldolase family. KDGluc aldolase subfamily. As to quaternary structure, homohexamer; trimer of dimers. Mg(2+) is required as a cofactor.

It carries out the reaction 5-dehydro-4-deoxy-D-glucarate = 2-hydroxy-3-oxopropanoate + pyruvate. It catalyses the reaction 2-dehydro-3-deoxy-D-glucarate = 2-hydroxy-3-oxopropanoate + pyruvate. It participates in carbohydrate acid metabolism; galactarate degradation; D-glycerate from galactarate: step 2/3. In terms of biological role, catalyzes the reversible retro-aldol cleavage of both 5-keto-4-deoxy-D-glucarate and 2-keto-3-deoxy-D-glucarate to pyruvate and tartronic semialdehyde. The chain is 5-keto-4-deoxy-D-glucarate aldolase from Shigella boydii serotype 4 (strain Sb227).